A 347-amino-acid chain; its full sequence is Phenylalanine--tRNA ligase alpha subunit (347 aa).

Glu265 serves as a coordination point for Mg(2+).

It belongs to the class-II aminoacyl-tRNA synthetase family. Phe-tRNA synthetase alpha subunit type 1 subfamily. As to quaternary structure, tetramer of two alpha and two beta subunits. The cofactor is Mg(2+).

Its subcellular location is the cytoplasm. The enzyme catalyses tRNA(Phe) + L-phenylalanine + ATP = L-phenylalanyl-tRNA(Phe) + AMP + diphosphate + H(+). The chain is Phenylalanine--tRNA ligase alpha subunit from Mycolicibacterium vanbaalenii (strain DSM 7251 / JCM 13017 / BCRC 16820 / KCTC 9966 / NRRL B-24157 / PYR-1) (Mycobacterium vanbaalenii).